The following is a 402-amino-acid chain: Tol-Pal system protein TolB (402 aa).

A signal peptide spans Met-1–Ala-17.

It belongs to the TolB family. In terms of assembly, the Tol-Pal system is composed of five core proteins: the inner membrane proteins TolA, TolQ and TolR, the periplasmic protein TolB and the outer membrane protein Pal. They form a network linking the inner and outer membranes and the peptidoglycan layer.

The protein localises to the periplasm. Functionally, part of the Tol-Pal system, which plays a role in outer membrane invagination during cell division and is important for maintaining outer membrane integrity. The protein is Tol-Pal system protein TolB of Campylobacter jejuni subsp. jejuni serotype O:2 (strain ATCC 700819 / NCTC 11168).